The following is a 352-amino-acid chain: Uroporphyrinogen decarboxylase (352 aa).

Substrate-binding positions include 26–30 (RQAGR), D76, Y153, S208, and H323.

This sequence belongs to the uroporphyrinogen decarboxylase family. In terms of assembly, homodimer.

Its subcellular location is the cytoplasm. The enzyme catalyses uroporphyrinogen III + 4 H(+) = coproporphyrinogen III + 4 CO2. The protein operates within porphyrin-containing compound metabolism; protoporphyrin-IX biosynthesis; coproporphyrinogen-III from 5-aminolevulinate: step 4/4. Catalyzes the decarboxylation of four acetate groups of uroporphyrinogen-III to yield coproporphyrinogen-III. In Prochlorococcus marinus (strain NATL2A), this protein is Uroporphyrinogen decarboxylase.